A 1819-amino-acid polypeptide reads, in one-letter code: Protein REDUCED CHLOROPLAST COVERAGE 2 (1819 aa).

Over residues 1–17 the composition is skewed to basic residues; it reads MAPKAGKTKPHKSKGEK. Disordered regions lie at residues 1–23, 128–180, 595–619, and 634–664; these read MAPK…KEEK, KPPV…GACE, QASS…GLGK, and KANK…LEKQ. Composition is skewed to basic and acidic residues over residues 135–145 and 600–612; these read LPKDSEKKESG and SESK…KPEP. Residues 329-603 enclose the Clu domain; sequence EDETWGGDGG…NQASSKSESK (275 aa). Residues 649 to 680 are a coiled coil; it reads TDNTSETEDQKELEKQNEEIEKMWKELVTETA. 5 TPR repeats span residues 892 to 925, 934 to 967, 976 to 1009, 1018 to 1051, and 1060 to 1093; these read GRTL…LVAV, AGAY…NERE, MKSY…LHLT, AATY…NQRL, and AASY…LQAK. Disordered stretches follow at residues 1152–1360, 1413–1456, 1468–1513, 1527–1573, 1616–1670, and 1731–1809; these read SGIK…PMLS, KVNA…SPKE, KAFP…SESV, LKTV…ASAP, STPH…PRIM, and LVSE…DYSD. Composition is skewed to basic and acidic residues over residues 1199-1224 and 1230-1239; these read SSDK…EQSK and KLVKPEATVH. Ser-1244 bears the Phosphoserine mark. The span at 1269–1313 shows a compositional bias: polar residues; it reads KLNTNFMNVTQQPSRSRGKSTNFTSPRTSSNELSISVAGSTSSPA. Position 1320 is a phosphoserine (Ser-1320). Over residues 1343-1354 the composition is skewed to polar residues; sequence LASSACTEQINK. Polar residues-rich tracts occupy residues 1496–1511 and 1536–1546; these read CLLN…NGSE and NLPNGDSSPKS. Basic and acidic residues predominate over residues 1551 to 1566; that stretch reads DGEKQDACEAQKEMSK. Positions 1650–1665 are enriched in polar residues; sequence SFPNSTESNGEANQFN. A compositionally biased stretch (basic and acidic residues) spans 1742–1759; it reads SEEKSGSEEESNNDKNAG. Polar residues predominate over residues 1767-1778; that stretch reads QETTDTPENGHS. The span at 1785–1800 shows a compositional bias: basic and acidic residues; it reads TTSHETCDEKNGERQG.

As to expression, expressed in the non-epidermal tissues of the true leaves. Not detected in the vegetative shoot meristem and leaf primordia.

Its subcellular location is the nucleus. The protein resides in the cytoplasm. It is found in the cytosol. Its function is as follows. Negatively regulates meristematic tissue proliferation by integrating developmental signals with carbon source availability. May act as the scaffold of a protein complex, which sequesters key factors that are required for the G2 to M transition in meristematic tissues. Together with REC2, REC3 and FMT/CLU, contributes to the establishment of the cellular volume devoted to the chloroplast compartment. The polypeptide is Protein REDUCED CHLOROPLAST COVERAGE 2 (Arabidopsis thaliana (Mouse-ear cress)).